The sequence spans 201 residues: Recombination protein RecR (201 aa).

Residues 58 to 73 (CEQCASITDTCPCRIC) form a C4-type zinc finger. One can recognise a Toprim domain in the interval 81–178 (DKLCLVSEWD…ELSRLAQGIP (98 aa)).

This sequence belongs to the RecR family.

Functionally, may play a role in DNA repair. It seems to be involved in an RecBC-independent recombinational process of DNA repair. It may act with RecF and RecO. The protein is Recombination protein RecR of Maridesulfovibrio salexigens (strain ATCC 14822 / DSM 2638 / NCIMB 8403 / VKM B-1763) (Desulfovibrio salexigens).